The primary structure comprises 237 residues: Purine nucleoside phosphorylase DeoD-type (237 aa).

His4 is an a purine D-ribonucleoside binding site. Residues Gly20, Arg24, Arg43, and 87–90 (RVGS) each bind phosphate. A purine D-ribonucleoside contacts are provided by residues 179–181 (EME) and 203–204 (SD). The Proton donor role is filled by Asp204.

Belongs to the PNP/UDP phosphorylase family. Homohexamer; trimer of homodimers.

The enzyme catalyses a purine D-ribonucleoside + phosphate = a purine nucleobase + alpha-D-ribose 1-phosphate. It carries out the reaction a purine 2'-deoxy-D-ribonucleoside + phosphate = a purine nucleobase + 2-deoxy-alpha-D-ribose 1-phosphate. Catalyzes the reversible phosphorolytic breakdown of the N-glycosidic bond in the beta-(deoxy)ribonucleoside molecules, with the formation of the corresponding free purine bases and pentose-1-phosphate. This Dichelobacter nodosus (strain VCS1703A) protein is Purine nucleoside phosphorylase DeoD-type.